The chain runs to 794 residues: ATP-dependent RNA helicase SUPV3L1, mitochondrial (794 aa).

The N-terminal 30 residues, 1 to 30 (MRRCAWPLLRLSSRVGLALRHGGAVRLRQA), are a transit peptide targeting the mitochondrion. Residues 182-322 (EARAIQRKII…AIDLVTELMY (141 aa)) enclose the Helicase ATP-binding domain. 195–202 (GPTNSGKT) serves as a coordination point for ATP. The region spanning 341 to 506 (VLDYALESLD…GLHPTPEQIE (166 aa)) is the Helicase C-terminal domain. Disordered stretches follow at residues 678 to 741 (EVMS…HGRG) and 764 to 794 (EWQD…KKKK). Over residues 689-704 (TKRDARTVSDHRDAKS) the composition is skewed to basic and acidic residues.

The protein belongs to the helicase family. Mg(2+) is required as a cofactor. Requires Mn(2+) as cofactor.

The protein resides in the nucleus. Its subcellular location is the mitochondrion matrix. It is found in the mitochondrion nucleoid. The enzyme catalyses ATP + H2O = ADP + phosphate + H(+). Functionally, major helicase player in mitochondrial RNA metabolism. Component of the mitochondrial degradosome (mtEXO) complex, that degrades 3' overhang double-stranded RNA with a 3'-to-5' directionality in an ATP-dependent manner. ATPase and ATP-dependent multisubstrate helicase, able to unwind double-stranded (ds) DNA and RNA, and RNA/DNA heteroduplexes in the 5'-to-3' direction. Plays a role in the RNA surveillance system in mitochondria; regulates the stability of mature mRNAs, the removal of aberrantly formed mRNAs and the rapid degradation of non coding processing intermediates. Also implicated in recombination and chromatin maintenance pathways. May protect cells from apoptosis. Associates with mitochondrial DNA. This is ATP-dependent RNA helicase SUPV3L1, mitochondrial (SUPV3L1) from Gallus gallus (Chicken).